The chain runs to 925 residues: Antiviral innate immune response receptor RIG-I (925 aa).

2 consecutive CARD domains span residues 1 to 87 (MTTE…GLYE) and 92 to 172 (WDFK…KTLK). Residue Ser-8 is modified to (Microbial infection) Phosphoserine. Ser-8 carries the phosphoserine modification. Residues Lys-48, Lys-96, Lys-154, and Lys-164 each participate in a glycyl lysine isopeptide (Lys-Gly) (interchain with G-Cter in ubiquitin) cross-link. Thr-170 is subject to Phosphothreonine. Residues Lys-172, Lys-181, Lys-193, and Lys-203 each participate in a glycyl lysine isopeptide (Lys-Gly) (interchain with G-Cter in ubiquitin) cross-link. Positions 218–925 (ECQNLSENSC…IPFDPAEMSK (708 aa)) are interaction with ZC3HAV1. A Helicase ATP-binding domain is found at 251–430 (ALPAMKGKNT…DEALDYICKL (180 aa)). 264 to 271 (APTGCGKT) serves as a coordination point for ATP. A DECH box motif is present at residues 372–375 (DECH). (Microbial infection) Deamidated asparagine; by herpes simplex virus 1/HHV-1 UL37 is present on residues Asn-495 and Asn-549. In terms of domain architecture, Helicase C-terminal spans 610–776 (KLEDLCFILQ…RLQTWDEAVF (167 aa)). The interval 735-925 (GSKCFLLTSN…IPFDPAEMSK (191 aa)) is mediates interaction with RNF135. Position 770 is a phosphothreonine; by CK2 (Thr-770). The RLR CTR domain maps to 794–925 (QEKPKPVPDK…IPFDPAEMSK (132 aa)). Cys-810 contributes to the Zn(2+) binding site. Lys-812 is covalently cross-linked (Glycyl lysine isopeptide (Lys-Gly) (interchain with G-Cter in ubiquitin)). Cys-813 serves as a coordination point for Zn(2+). Residues Ser-854 and Ser-855 each carry the phosphoserine; by CK2 modification. Lys-858 is subject to N6-acetyllysine. Cys-864 and Cys-869 together coordinate Zn(2+). Lys-909 bears the N6-acetyllysine mark.

This sequence belongs to the helicase family. RLR subfamily. As to quaternary structure, monomer; maintained as a monomer in an autoinhibited state. Upon binding of viral RNAs and conformational shift, homooligomerizes and forms filaments on these molecules. Interacts (via tandem CARD domain) with MAVS/IPS1 promoting its filamentation. Interacts with DHX58/LGP2, IKBKE, TBK1 and STING1. Interacts (via CARD domain) with TRIM25 (via SPRY domain). Interacts (double-stranded RNA-bound oligomeric form) with RNF135 (homodimer); involved in RNA length-dependent activation of the RIG-I signaling pathway. Interacts with CYLD. Interacts with NLRC5; blocks the interaction of MAVS/IPS1 to RIGI. Interacts with SRC. Interacts with DDX60. Interacts with isoform 2 of ZC3HAV1 (via zinc-fingers) in an RNA-dependent manner. Interacts (via tandem CARD domain) with SEC14L1; the interaction is direct and impairs the interaction of RIGI with MAVS/IPS1. Interacts with VCP/p97; interaction is direct and allows the recruitment of RNF125 and subsequent ubiquitination and degradation. Interacts with NOP53; may regulate RIGI through USP15-mediated 'Lys-63'-linked deubiquitination. Interacts with SIGLEC10, CBL and PTPN11; within a negative feedback loop leading to RIGI degradation. Interacts with LRRC25. Interacts with ZCCHC3; leading to activation of RIGI. Interacts with RNF123. Interacts with UBE2D3 and UBE2N; E2 ubiquitin ligases involved in RNF135-mediated ubiquitination of RIGI and activation of the RIG-I signaling pathway. Interacts with IFIT3. Interacts with DDX3X. Interacts with RTN3. Interacts with ARL16; this interaction is GTP-dependent and induced upon viral infection; this interaction suppresses the RNA sensing activity of RIGI. Interacts with DHX16; this interaction enhances RIGI-mediated antiviral response. Interacts with IRGM; promoting RIGI degradation. Interacts with IFI6; this interaction inhibits RIGI activation. Interacts with ECSIT; this interaction bridges RIGI to the MAVS complex at the mitochondrion. Interacts with YWHAE; this interaction drives RIGI at the mitochondrion. In terms of assembly, (Microbial infection) Interacts with protein Z of Guanarito virus, Machupo virus, Junin arenavirus and Sabia virus. This interaction disrupts its interaction with MAVS/IPS1, impeding downstream IRF3 and NF-kappa-B activation and resulting in decreased IFN-beta induction. (Microbial infection) Interacts (via CARD domain) with Human respiratory syncytial virus A non-structural protein 2 (NS2) and this interaction disrupts its interaction with MAVS/IPS1, impeding downstream IRF3 activation. As to quaternary structure, (Microbial infection) Interacts with Rotavirus A non-structural protein 1 (NSP1) and this interaction induces down-regulation of RIGI. In terms of assembly, (Microbial infection) Interacts with paramyxoviruses (Sendai virus, Nipah virus, Measles virus and Parainfluenza virus 5) protein V; this interaction inhibits TRIM25-mediated ubiquitination of RIG-I and prevents downstream RIG-I signaling thereby inhibiting the IFN responses. (Microbial infection) Interacts with herpes simplex virus 1 protein US11; this interaction prevents the interaction of MAVS/IPS1 to RIGI. As to quaternary structure, (Microbial infection) Interacts with herpes simplex virus 1 protein UL37; this interaction deaminates RIGI and inhibits its activation. In terms of assembly, (Microbial infection) Interacts with Severe fever with thrombocytopenia virus (SFTSV) NSs; this interaction this interaction sequesters RIGI in NSs-induced cytoplasmic inclusion bodies thereby inhibiting the IFN responses. In terms of processing, phosphorylated in resting cells and dephosphorylated in RNA virus-infected cells. Phosphorylation at Thr-770, Ser-854 and Ser-855 results in inhibition of its activity while dephosphorylation at these sites results in its activation. Post-translationally, ubiquitinated. 'Lys-63' ubiquitination by RNF135, which occurs after RNA-binding and homodimerization, releases the autoinhibition of the CARD domains by the RLR CTR domain, an essential step in the activation of the RIG-I signaling pathway. Lys-172 is the critical site of ubiquitination for MAVS/IPS1 binding and to induce anti-viral signal transduction. Lys-154, Lys-164 and Lys-172 are shared sites for RNF135-mediated and TRIM4-mediated ubiquitination. Also undergoes 'Lys-48' ubiquitination at Lys-181 by RNF125 that leads to proteasomal degradation. 'Lys-48' ubiquitination follows viral infection and is enhanced by 'Lys-63'-linked ubiquitination of the CARD domains that promotes interaction with VCP/p97 and subsequent recruitment of RNF125. Within a negative feedback loop involving SIGLEC10 and PTPN11, 'Lys-48' ubiquitination at Lys-812 by CBL also elicits the proteasomal degradation of RIGI. Deubiquitinated by CYLD, a protease that selectively cleaves 'Lys-63'-linked ubiquitin chains. Also probably deubiquitinated by USP17L2/USP17 that cleaves 'Lys-48'- and 'Lys-63'-linked ubiquitin chains and positively regulates the receptor. Ubiquitinated by TRIM40 via 'Lys-48'-linked ubiquitination; leading to proteasomal degradation. Deubiquitinated by USP27X that cleaves 'Lys-63'-linked ubiquitin chains and inhibits the innate immune receptor activity. Deubiquitinated by USP3 that also cleaves 'Lys-63'-linked ubiquitin chains and inhibits the innate immune receptor activity. Undergoes 'Lys-48'-linked ubiquitination catalyzed by MARCHF5 at Lys-193 and Lys-203, leading to proteasomal degradation. Phosphorylated at Ser-8 and Thr-170; these phosphorylations suppresse the TRIM25-mediated 'Lys-63'-linked ubiquitination of RIG-I and thereby prevents RIG-I downstream signaling. Dephosphorylated by phosphatases PPP1CA/PPP1CC; this step is essential to activate RIGI and initiate downstream signaling. In terms of processing, ISGylated. Conjugated to ubiquitin-like protein ISG15 upon IFN-beta stimulation. ISGylation negatively regulates its function in antiviral signaling response. Post-translationally, sumoylated, probably by MUL1; inhibiting its polyubiquitination. Acetylated in response to RNA virus infection. Deacetylated by HDAC6 in the presence of viral mRNAs which is required for detection of viral RNA by RIGI. In terms of processing, (Microbial infection) Deamidated on Asn-495 and Asn-549 by herpes simplex virus 1 protein UL37. These modifications eliminate RIGI detection of viral RNA and restriction of viral replication. Post-translationally, degraded via selective autophagy following interaction with IRGM. IRGM promotes RIGI recruitment to autophagosome membranes, promoting its SQSTM1/p62-dependent autophagic degradation. (Microbial infection) Cleaved by the protease 3C of coxsackievirus B3, poliovirus and enterovirus 71 allowing the virus to disrupt the host type I interferon production. In terms of processing, (Microbial infection) Phosphorylated at Ser-8 by herpes simplex virus 1 protein US3 leading to inhibition of critical RIGI activation steps. In terms of tissue distribution, present in vascular smooth cells (at protein level).

Its subcellular location is the cytoplasm. The protein localises to the cell projection. It is found in the ruffle membrane. The protein resides in the cytoskeleton. It localises to the cell junction. Its subcellular location is the tight junction. It carries out the reaction ATP + H2O = ADP + phosphate + H(+). Innate immune receptor that senses cytoplasmic viral nucleic acids and activates a downstream signaling cascade leading to the production of type I interferons and pro-inflammatory cytokines. Forms a ribonucleoprotein complex with viral RNAs on which it homooligomerizes to form filaments. The homooligomerization allows the recruitment of RNF135 an E3 ubiquitin-protein ligase that activates and amplifies the RIG-I-mediated antiviral signaling in an RNA length-dependent manner through ubiquitination-dependent and -independent mechanisms. Upon activation, associates with mitochondria antiviral signaling protein (MAVS/IPS1) that activates the IKK-related kinases TBK1 and IKBKE which in turn phosphorylate the interferon regulatory factors IRF3 and IRF7, activating transcription of antiviral immunological genes including the IFN-alpha and IFN-beta interferons. Ligands include 5'-triphosphorylated ssRNAs and dsRNAs but also short dsRNAs (&lt;1 kb in length). In addition to the 5'-triphosphate moiety, blunt-end base pairing at the 5'-end of the RNA is very essential. Overhangs at the non-triphosphorylated end of the dsRNA RNA have no major impact on its activity. A 3'overhang at the 5'triphosphate end decreases and any 5'overhang at the 5' triphosphate end abolishes its activity. Detects both positive and negative strand RNA viruses including members of the families Paramyxoviridae: Human respiratory syncytial virus and measles virus (MeV), Rhabdoviridae: vesicular stomatitis virus (VSV), Orthomyxoviridae: influenza A and B virus, Flaviviridae: Japanese encephalitis virus (JEV), hepatitis C virus (HCV), dengue virus (DENV) and west Nile virus (WNV). It also detects rotaviruses and reoviruses. Detects and binds to SARS-CoV-2 RNAs which is inhibited by m6A RNA modifications. Also involved in antiviral signaling in response to viruses containing a dsDNA genome such as Epstein-Barr virus (EBV). Detects dsRNA produced from non-self dsDNA by RNA polymerase III, such as Epstein-Barr virus-encoded RNAs (EBERs). May play important roles in granulocyte production and differentiation, bacterial phagocytosis and in the regulation of cell migration. The chain is Antiviral innate immune response receptor RIG-I from Homo sapiens (Human).